The sequence spans 55 residues: MSTSRKLKSQGMRRGKNRTPHKGVKRSGSKRKYRKSSLKSRKRCDDANRNLRSHL.

Basic residues predominate over residues 1 to 42 (MSTSRKLKSQGMRRGKNRTPHKGVKRSGSKRKYRKSSLKSRK). Residues 1–55 (MSTSRKLKSQGMRRGKNRTPHKGVKRSGSKRKYRKSSLKSRKRCDDANRNLRSHL) form a disordered region. Phosphoserine occurs at positions 9, 36, 37, and 40.

Belongs to the nuclear transition protein 1 family. Testis.

It is found in the nucleus. The protein resides in the chromosome. Its function is as follows. Plays a key role in the replacement of histones to protamine in the elongating spermatids of mammals. In condensing spermatids, loaded onto the nucleosomes, where it promotes the recruitment and processing of protamines, which are responsible for histone eviction. This Bos taurus (Bovine) protein is Spermatid nuclear transition protein 1 (TNP1).